A 227-amino-acid chain; its full sequence is Cytochrome c oxidase subunit 2 (227 aa).

Residues 1 to 14 (MAYPFQLGLQDATS) are Mitochondrial intermembrane-facing. Residues 15 to 45 (PIMEELLHFHDHTLMIVFLISSLVLYIISLM) traverse the membrane as a helical segment. At 46–59 (LTTKLTHTSTMDAQ) the chain is on the mitochondrial matrix side. Residues 60 to 87 (EVETVWTILPAIILVLIALPSLRILYMM) form a helical membrane-spanning segment. At 88 to 227 (DEINNPSLTV…YFETWSALMV (140 aa)) the chain is on the mitochondrial intermembrane side. His161, Cys196, Glu198, Cys200, His204, and Met207 together coordinate Cu cation. Glu198 is a Mg(2+) binding site. Tyr218 carries the phosphotyrosine modification.

This sequence belongs to the cytochrome c oxidase subunit 2 family. In terms of assembly, component of the cytochrome c oxidase (complex IV, CIV), a multisubunit enzyme composed of 14 subunits. The complex is composed of a catalytic core of 3 subunits MT-CO1, MT-CO2 and MT-CO3, encoded in the mitochondrial DNA, and 11 supernumerary subunits COX4I, COX5A, COX5B, COX6A, COX6B, COX6C, COX7A, COX7B, COX7C, COX8 and NDUFA4, which are encoded in the nuclear genome. The complex exists as a monomer or a dimer and forms supercomplexes (SCs) in the inner mitochondrial membrane with NADH-ubiquinone oxidoreductase (complex I, CI) and ubiquinol-cytochrome c oxidoreductase (cytochrome b-c1 complex, complex III, CIII), resulting in different assemblies (supercomplex SCI(1)III(2)IV(1) and megacomplex MCI(2)III(2)IV(2)). Found in a complex with TMEM177, COA6, COX18, COX20, SCO1 and SCO2. Interacts with TMEM177 in a COX20-dependent manner. Interacts with COX20. Interacts with COX16. Requires Cu cation as cofactor.

It is found in the mitochondrion inner membrane. It catalyses the reaction 4 Fe(II)-[cytochrome c] + O2 + 8 H(+)(in) = 4 Fe(III)-[cytochrome c] + 2 H2O + 4 H(+)(out). In terms of biological role, component of the cytochrome c oxidase, the last enzyme in the mitochondrial electron transport chain which drives oxidative phosphorylation. The respiratory chain contains 3 multisubunit complexes succinate dehydrogenase (complex II, CII), ubiquinol-cytochrome c oxidoreductase (cytochrome b-c1 complex, complex III, CIII) and cytochrome c oxidase (complex IV, CIV), that cooperate to transfer electrons derived from NADH and succinate to molecular oxygen, creating an electrochemical gradient over the inner membrane that drives transmembrane transport and the ATP synthase. Cytochrome c oxidase is the component of the respiratory chain that catalyzes the reduction of oxygen to water. Electrons originating from reduced cytochrome c in the intermembrane space (IMS) are transferred via the dinuclear copper A center (CU(A)) of subunit 2 and heme A of subunit 1 to the active site in subunit 1, a binuclear center (BNC) formed by heme A3 and copper B (CU(B)). The BNC reduces molecular oxygen to 2 water molecules using 4 electrons from cytochrome c in the IMS and 4 protons from the mitochondrial matrix. The chain is Cytochrome c oxidase subunit 2 (MT-CO2) from Cerdocyon thous (Crab-eating fox).